The chain runs to 154 residues: 6,7-dimethyl-8-ribityllumazine synthase (154 aa).

Residues Phe23, Ala57–Glu59, and Ala81–Ile83 contribute to the 5-amino-6-(D-ribitylamino)uracil site. Position 86–87 (Ala86–Thr87) interacts with (2S)-2-hydroxy-3-oxobutyl phosphate. His89 (proton donor) is an active-site residue. Residue Phe114 participates in 5-amino-6-(D-ribitylamino)uracil binding. Arg128 lines the (2S)-2-hydroxy-3-oxobutyl phosphate pocket.

It belongs to the DMRL synthase family.

It catalyses the reaction (2S)-2-hydroxy-3-oxobutyl phosphate + 5-amino-6-(D-ribitylamino)uracil = 6,7-dimethyl-8-(1-D-ribityl)lumazine + phosphate + 2 H2O + H(+). The protein operates within cofactor biosynthesis; riboflavin biosynthesis; riboflavin from 2-hydroxy-3-oxobutyl phosphate and 5-amino-6-(D-ribitylamino)uracil: step 1/2. Functionally, catalyzes the formation of 6,7-dimethyl-8-ribityllumazine by condensation of 5-amino-6-(D-ribitylamino)uracil with 3,4-dihydroxy-2-butanone 4-phosphate. This is the penultimate step in the biosynthesis of riboflavin. The protein is 6,7-dimethyl-8-ribityllumazine synthase of Nautilia profundicola (strain ATCC BAA-1463 / DSM 18972 / AmH).